A 124-amino-acid chain; its full sequence is Large ribosomal subunit protein bL12 (124 aa).

The protein belongs to the bacterial ribosomal protein bL12 family. In terms of assembly, homodimer. Part of the ribosomal stalk of the 50S ribosomal subunit. Forms a multimeric L10(L12)X complex, where L10 forms an elongated spine to which 2 to 4 L12 dimers bind in a sequential fashion. Binds GTP-bound translation factors.

Functionally, forms part of the ribosomal stalk which helps the ribosome interact with GTP-bound translation factors. Is thus essential for accurate translation. This Idiomarina loihiensis (strain ATCC BAA-735 / DSM 15497 / L2-TR) protein is Large ribosomal subunit protein bL12.